The sequence spans 242 residues: Pyr4-family terpene cyclase mfmH (242 aa).

A run of 4 helical transmembrane segments spans residues 25–45 (VQDG…ILYI), 55–75 (GMPL…GAAI), 80–100 (AQVV…YTTW), and 116–136 (NLGW…WAFL). N170 is a glycosylation site (N-linked (GlcNAc...) asparagine). The next 2 helical transmembrane spans lie at 175 to 195 (SWGI…IFVW) and 211 to 231 (VTIF…FVYA).

This sequence belongs to the paxB family.

The protein localises to the membrane. Its pathway is secondary metabolite biosynthesis; terpenoid biosynthesis. Its function is as follows. Terpene cyclase; part of the gene cluster that mediates the biosynthesis of the phthalide-terpenoid hybrid 11'-O-desmethylfendlerol. Within the pathway, mfmH catalyzes the last step and cyclizes the prenyl unit of 5-O-farnesylcyclopolic acid into a drimane-like structure to yield 11'-O-desmethylfendlerol. The biosynthesis of 11'-O-desmethylfendlerol begins with the NR-PKS mfmB that forms 3,5-dimethylorsellinic acid (DMOA), which is then transformed into the phthalide 5,7-dihydroxy-4-(hydroxymethyl)-6-methylphthalide by the cytochrome P450 monooxygenase mfmA and the hydrolase mfmC. Subsequently, the methyltransferase mfmE catalyzes 7-O-methylation to yield 5-hydroxy-4-(hydroxymethyl)-7-methoxy-6-methylphthalide, which undergoes C-3 hydroxylation by the cytochrome P450 monooxygenase mfmF. The resultant cyclopolic acid (2,5-dihydroxy-4-(hydroxymethyl)-7-methoxy-6-methylphthalide) is then farnesylated by the DMATS-type prenyltransferase mfmD to afford 5-O-farnesylcyclopolic acid. Finally, the Pyr4-family terpene cyclase mfmH cyclizes the farnesyl moiety of 5-O-farnesylcyclopolic acid into a drimane-like structure, thus completing the biosynthesis of 11'-O-desmethylfendlerol. In Annulohypoxylon moriforme (Filamentous fungus), this protein is Pyr4-family terpene cyclase mfmH.